Consider the following 465-residue polypeptide: Fumarate hydratase class II (465 aa).

Residues 99–101 (SGT), R127, 130–133 (HPND), 140–142 (STN), and T188 contribute to the substrate site. H189 serves as the catalytic Proton donor/acceptor. S319 is an active-site residue. Substrate is bound by residues S320 and 325–327 (KVN).

This sequence belongs to the class-II fumarase/aspartase family. Fumarase subfamily. As to quaternary structure, homotetramer.

Its subcellular location is the cytoplasm. It catalyses the reaction (S)-malate = fumarate + H2O. The protein operates within carbohydrate metabolism; tricarboxylic acid cycle; (S)-malate from fumarate: step 1/1. Its function is as follows. Involved in the TCA cycle. Catalyzes the stereospecific interconversion of fumarate to L-malate. The sequence is that of Fumarate hydratase class II from Parasynechococcus marenigrum (strain WH8102).